The sequence spans 740 residues: E3 ubiquitin-protein ligase WAV3 (740 aa).

Residues 14–105 are disordered; it reads PRNSDAAAPD…AISNPSSPRS (92 aa). Positions 49–67 are enriched in low complexity; the sequence is SGGSNPSTPRSTSSPSLRC. Positions 71-90 are enriched in polar residues; sequence DAQTPTAEQTSTPRSATKSP. The RING-type; atypical zinc finger occupies 122–167; the sequence is CGICLNSVKTGQGTAKYTAECSHAFHFPCIADYVRKQGKLVCPVCN. One can recognise a VWFA domain in the interval 332-476; the sequence is DLVVVVDVGG…IPVTEHGFGE (145 aa). The segment at 677-709 is disordered; that stretch reads QSQHQQQHNQRRRGSERETTTTMTLMDENGEPL.

In terms of assembly, interacts with SINAT1, SINAT2, SINAT3, SINAT4, SINAT5, TOR1/SPR2 and FIP2. Expressed in root tips and leaf primordia.

The catalysed reaction is S-ubiquitinyl-[E2 ubiquitin-conjugating enzyme]-L-cysteine + [acceptor protein]-L-lysine = [E2 ubiquitin-conjugating enzyme]-L-cysteine + N(6)-ubiquitinyl-[acceptor protein]-L-lysine.. E3 ubiquitin-protein ligase involved in the regulation of root growth. Acts as a positive regulator of root gravitropism. Possesses E3 protein ligase activity in vitro. This chain is E3 ubiquitin-protein ligase WAV3, found in Arabidopsis thaliana (Mouse-ear cress).